A 641-amino-acid polypeptide reads, in one-letter code: Tetracycline resistance protein TetQ (641 aa).

A tr-type G domain is found at 1-244 (MNIINLGILA…AITSFILPPA (244 aa)). Residues 10–17 (AHIDAGKT), 74–78 (DTPGH), and 128–131 (NKID) each bind GTP.

Belongs to the TRAFAC class translation factor GTPase superfamily. Classic translation factor GTPase family. TetM/TetO subfamily.

Functionally, abolishes the inhibitory effect of tetracyclin on protein synthesis by a non-covalent modification of the ribosomes. In Bacteroides thetaiotaomicron, this protein is Tetracycline resistance protein TetQ (tetQ).